Here is an 871-residue protein sequence, read N- to C-terminus: Translation initiation factor IF-2 (871 aa).

2 disordered regions span residues 60–101 (KKNI…QEVK) and 184–203 (ESLKKKKKEKKSFVASKKES). Basic residues predominate over residues 61–72 (KNIKTPTAKKPK). Residues 73 to 101 (KENIKEQEKLNESEKKEPKKEEKLKQEVK) show a composition bias toward basic and acidic residues. The tr-type G domain occupies 370–537 (TRAPVITIMG…IVLLQADILE (168 aa)). The tract at residues 379 to 386 (GHVDHGKT) is G1. 379–386 (GHVDHGKT) is a binding site for GTP. Residues 404–408 (GITQH) form a G2 region. Residues 425-428 (DTPG) form a G3 region. GTP is bound by residues 425–429 (DTPGH) and 479–482 (NKMD). The interval 479 to 482 (NKMD) is G4. The segment at 515–517 (SAK) is G5.

It belongs to the TRAFAC class translation factor GTPase superfamily. Classic translation factor GTPase family. IF-2 subfamily.

The protein resides in the cytoplasm. One of the essential components for the initiation of protein synthesis. Protects formylmethionyl-tRNA from spontaneous hydrolysis and promotes its binding to the 30S ribosomal subunits. Also involved in the hydrolysis of GTP during the formation of the 70S ribosomal complex. This Campylobacter jejuni subsp. jejuni serotype O:23/36 (strain 81-176) protein is Translation initiation factor IF-2.